A 969-amino-acid chain; its full sequence is Vacuolar membrane protease (969 aa).

The Cytoplasmic segment spans residues 1 to 12 (MTRVNSIIGFRP). The helical transmembrane segment at 13–33 (IPVTLLTVITYVSLFSALLFI) threads the bilayer. The Vacuolar segment spans residues 34-381 (DRQPPAVAKK…RAFSVLHLHT (348 aa)). Asn125 carries an N-linked (GlcNAc...) asparagine glycan. Zn(2+) is bound by residues His166 and Asp178. Glu216 functions as the Proton acceptor in the catalytic mechanism. Zn(2+)-binding residues include Glu217, Glu242, and His315. An N-linked (GlcNAc...) asparagine glycan is attached at Asn355. The helical transmembrane segment at 382-402 (IFAFTITLIVVPFVVVLVAMW) threads the bilayer. The Cytoplasmic portion of the chain corresponds to 403–438 (ALGHFDKLYFFSNTAYIPPPPEHSIASRTTQGWRGV). A helical membrane pass occupies residues 439 to 459 (LRFPVAFVAASAGVVGMAFLI). At 460–469 (NKINPMVVYA) the chain is on the vacuolar side. The helical transmembrane segment at 470–490 (SQYTVWTCFLSTWWIIAWVIL) threads the bilayer. Residues 491–505 (RGADAVRPTALARGY) are Cytoplasmic-facing. Residues 506–526 (GFLEQWLLWLVAMIGVAISIG) form a helical membrane-spanning segment. The Vacuolar segment spans residues 527–531 (KSHLG). Residues 532–552 (SGYWVLVFYSGFFTSAFISLL) form a helical membrane-spanning segment. The Cytoplasmic segment spans residues 553–662 (EMAALQKKSE…WSKDLPSWTW (110 aa)). A disordered region spans residues 571 to 629 (DQAYPPEEHSQTGASGNISNRAANDDDDAGEHATEETPLFRGPNRPLSFAPHRNPRYDN). Polar residues predominate over residues 581–592 (QTGASGNISNRA). The helical transmembrane segment at 663 to 683 (ILQFLATVPLQLVLAGSVALL) threads the bilayer. The Vacuolar portion of the chain corresponds to 684 to 698 (LGNALAQTGADGSDM). Residues 699 to 719 (LTVLLGFGVFSIILLLPVAPF) form a helical membrane-spanning segment. The Cytoplasmic segment spans residues 720–727 (LHRITYHV). The helical transmembrane segment at 728–748 (TLFIFVIFVGTFIYNLAAPPF) threads the bilayer. Residues 749–969 (SPNARLKVYF…LVEGSVPFMI (221 aa)) lie on the Vacuolar side of the membrane. Asn840 carries N-linked (GlcNAc...) asparagine glycosylation.

Belongs to the peptidase M28 family. The cofactor is Zn(2+).

The protein localises to the vacuole membrane. Its function is as follows. May be involved in vacuolar sorting and osmoregulation. The polypeptide is Vacuolar membrane protease (Tuber melanosporum (strain Mel28) (Perigord black truffle)).